The sequence spans 202 residues: Peptidyl-tRNA hydrolase (202 aa).

Tyr22 is a binding site for tRNA. The active-site Proton acceptor is His27. TRNA is bound by residues Phe69, Asn71, and Asn117.

The protein belongs to the PTH family. In terms of assembly, monomer.

It localises to the cytoplasm. The catalysed reaction is an N-acyl-L-alpha-aminoacyl-tRNA + H2O = an N-acyl-L-amino acid + a tRNA + H(+). Functionally, hydrolyzes ribosome-free peptidyl-tRNAs (with 1 or more amino acids incorporated), which drop off the ribosome during protein synthesis, or as a result of ribosome stalling. In terms of biological role, catalyzes the release of premature peptidyl moieties from peptidyl-tRNA molecules trapped in stalled 50S ribosomal subunits, and thus maintains levels of free tRNAs and 50S ribosomes. The polypeptide is Peptidyl-tRNA hydrolase (Thiobacillus denitrificans (strain ATCC 25259 / T1)).